The following is a 159-amino-acid chain: MIAFAKQFRVRISPQKARLVCQLIVGKKTADAQNILSNTPKKAATLIAKLLNSAIANATNNHGMNGDALYVFECVANQGPSMKRTIPRAKGSSNMITKRSSNLVVKLSDNPNERQELIKQQKALVKKRVEGQQKAKMARQKAVTSVVKAPSKTQGGVQK.

Positions 129–159 are disordered; sequence VEGQQKAKMARQKAVTSVVKAPSKTQGGVQK.

It belongs to the universal ribosomal protein uL22 family. Part of the 50S ribosomal subunit.

Its function is as follows. This protein binds specifically to 23S rRNA; its binding is stimulated by other ribosomal proteins, e.g. L4, L17, and L20. It is important during the early stages of 50S assembly. It makes multiple contacts with different domains of the 23S rRNA in the assembled 50S subunit and ribosome. In terms of biological role, the globular domain of the protein is located near the polypeptide exit tunnel on the outside of the subunit, while an extended beta-hairpin is found that lines the wall of the exit tunnel in the center of the 70S ribosome. The polypeptide is Large ribosomal subunit protein uL22 (rplV) (Mycoplasma pneumoniae (strain ATCC 29342 / M129 / Subtype 1) (Mycoplasmoides pneumoniae)).